We begin with the raw amino-acid sequence, 463 residues long: Glutamate--tRNA ligase (463 aa).

The short motif at 10-20 (PSPTGYLHIGG) is the 'HIGH' region element. Residues 252-256 (KLSKR) carry the 'KMSKS' region motif. Lys255 provides a ligand contact to ATP.

This sequence belongs to the class-I aminoacyl-tRNA synthetase family. Glutamate--tRNA ligase type 1 subfamily. Monomer.

The protein resides in the cytoplasm. It carries out the reaction tRNA(Glu) + L-glutamate + ATP = L-glutamyl-tRNA(Glu) + AMP + diphosphate. In terms of biological role, catalyzes the attachment of glutamate to tRNA(Glu) in a two-step reaction: glutamate is first activated by ATP to form Glu-AMP and then transferred to the acceptor end of tRNA(Glu). In Mycoplasmopsis agalactiae (strain NCTC 10123 / CIP 59.7 / PG2) (Mycoplasma agalactiae), this protein is Glutamate--tRNA ligase.